A 154-amino-acid chain; its full sequence is Myoglobin (154 aa).

A Globin domain is found at 2 to 148 (GLSDGEWQLV…FRKDMASNYK (147 aa)). Phosphoserine is present on serine 4. Histidine 65 is a nitrite binding site. Histidine 65 is a binding site for O2. The residue at position 68 (threonine 68) is a Phosphothreonine. Histidine 94 contributes to the heme b binding site.

Belongs to the globin family. In terms of assembly, monomeric.

It localises to the cytoplasm. The protein resides in the sarcoplasm. It carries out the reaction Fe(III)-heme b-[protein] + nitric oxide + H2O = Fe(II)-heme b-[protein] + nitrite + 2 H(+). It catalyses the reaction H2O2 + AH2 = A + 2 H2O. Its function is as follows. Monomeric heme protein which primary function is to store oxygen and facilitate its diffusion within muscle tissues. Reversibly binds oxygen through a pentacoordinated heme iron and enables its timely and efficient release as needed during periods of heightened demand. Depending on the oxidative conditions of tissues and cells, and in addition to its ability to bind oxygen, it also has a nitrite reductase activity whereby it regulates the production of bioactive nitric oxide. Under stress conditions, like hypoxia and anoxia, it also protects cells against reactive oxygen species thanks to its pseudoperoxidase activity. The chain is Myoglobin from Homo sapiens (Human).